The primary structure comprises 118 residues: LYR motif containing protein 1 (118 aa).

The segment at 91–118 is disordered; that stretch reads TQKGRKLRAQQRLRKQAKPVYLQSQDET. The segment covering 93 to 107 has biased composition (basic residues); sequence KGRKLRAQQRLRKQA.

It belongs to the complex I LYR family.

In Danio rerio (Zebrafish), this protein is LYR motif containing protein 1 (lyrm1).